The following is a 293-amino-acid chain: tRNA-cytidine(32) 2-sulfurtransferase (293 aa).

Positions 71 to 76 match the PP-loop motif motif; the sequence is SGGKDS. 3 residues coordinate [4Fe-4S] cluster: Cys146, Cys149, and Cys237.

It belongs to the TtcA family. Homodimer. Mg(2+) is required as a cofactor. [4Fe-4S] cluster serves as cofactor.

It localises to the cytoplasm. The enzyme catalyses cytidine(32) in tRNA + S-sulfanyl-L-cysteinyl-[cysteine desulfurase] + AH2 + ATP = 2-thiocytidine(32) in tRNA + L-cysteinyl-[cysteine desulfurase] + A + AMP + diphosphate + H(+). It functions in the pathway tRNA modification. Functionally, catalyzes the ATP-dependent 2-thiolation of cytidine in position 32 of tRNA, to form 2-thiocytidine (s(2)C32). The sulfur atoms are provided by the cysteine/cysteine desulfurase (IscS) system. The sequence is that of tRNA-cytidine(32) 2-sulfurtransferase from Sinorhizobium medicae (strain WSM419) (Ensifer medicae).